The chain runs to 219 residues: Holliday junction branch migration complex subunit RuvA (219 aa).

Positions 1–71 (MISWIKGELV…EDSDMLFGFS (71 aa)) are domain I. The segment at 72–150 (TKDQRDFFIQ…NKEIEKENLN (79 aa)) is domain II. The interval 151 to 161 (INNFLEKNKDL) is flexible linker. The domain III stretch occupies residues 161 to 219 (LDSIFKDIDLTLQSLNYSKKEIKNLFPKLINNIKNSSLEKESISFENLLKEAMNYLDHK).

This sequence belongs to the RuvA family. As to quaternary structure, homotetramer. Forms an RuvA(8)-RuvB(12)-Holliday junction (HJ) complex. HJ DNA is sandwiched between 2 RuvA tetramers; dsDNA enters through RuvA and exits via RuvB. An RuvB hexamer assembles on each DNA strand where it exits the tetramer. Each RuvB hexamer is contacted by two RuvA subunits (via domain III) on 2 adjacent RuvB subunits; this complex drives branch migration. In the full resolvosome a probable DNA-RuvA(4)-RuvB(12)-RuvC(2) complex forms which resolves the HJ.

It localises to the cytoplasm. Its function is as follows. The RuvA-RuvB-RuvC complex processes Holliday junction (HJ) DNA during genetic recombination and DNA repair, while the RuvA-RuvB complex plays an important role in the rescue of blocked DNA replication forks via replication fork reversal (RFR). RuvA specifically binds to HJ cruciform DNA, conferring on it an open structure. The RuvB hexamer acts as an ATP-dependent pump, pulling dsDNA into and through the RuvAB complex. HJ branch migration allows RuvC to scan DNA until it finds its consensus sequence, where it cleaves and resolves the cruciform DNA. The chain is Holliday junction branch migration complex subunit RuvA from Prochlorococcus marinus subsp. pastoris (strain CCMP1986 / NIES-2087 / MED4).